The following is a 113-amino-acid chain: U11-theraphotoxin-Hhn1a (113 aa).

The signal sequence occupies residues methionine 1 to alanine 21. The propeptide occupies aspartate 22–arginine 74. The disordered stretch occupies residues glutamate 61 to aspartate 83. 3 disulfides stabilise this stretch: cysteine 75/cysteine 90, cysteine 82/cysteine 95, and cysteine 89/cysteine 110.

The protein belongs to the neurotoxin 14 (magi-1) family. 01 (HNTX-16) subfamily. As to expression, expressed by the venom gland.

It is found in the secreted. Its function is as follows. Probable ion channel inhibitor. The polypeptide is U11-theraphotoxin-Hhn1a (Cyriopagopus hainanus (Chinese bird spider)).